The sequence spans 281 residues: NADPH-dependent 7-cyano-7-deazaguanine reductase (281 aa).

87-89 (IES) serves as a coordination point for substrate. 89-90 (SK) is a binding site for NADPH. The Thioimide intermediate role is filled by cysteine 188. The Proton donor role is filled by aspartate 195. 227–228 (HE) serves as a coordination point for substrate. NADPH is bound at residue 256–257 (RG). A disordered region spans residues 261–281 (INPYRSTEQDKPAHNNRMARQ).

Belongs to the GTP cyclohydrolase I family. QueF type 2 subfamily. As to quaternary structure, homodimer.

It localises to the cytoplasm. The enzyme catalyses 7-aminomethyl-7-carbaguanine + 2 NADP(+) = 7-cyano-7-deazaguanine + 2 NADPH + 3 H(+). It functions in the pathway tRNA modification; tRNA-queuosine biosynthesis. Catalyzes the NADPH-dependent reduction of 7-cyano-7-deazaguanine (preQ0) to 7-aminomethyl-7-deazaguanine (preQ1). The chain is NADPH-dependent 7-cyano-7-deazaguanine reductase from Vibrio campbellii (strain ATCC BAA-1116).